The following is a 311-amino-acid chain: Tyrosine recombinase XerD (311 aa).

The Core-binding (CB) domain occupies 2–95 (KTLALQLQGY…AVRGLHRFAA (94 aa)). A Tyr recombinase domain is found at 116–304 (RLPKSLTIDE…TVHALREVWA (189 aa)). Catalysis depends on residues arginine 160, lysine 184, histidine 256, arginine 259, and histidine 282. Residue tyrosine 291 is the O-(3'-phospho-DNA)-tyrosine intermediate of the active site.

Belongs to the 'phage' integrase family. XerD subfamily. As to quaternary structure, forms a cyclic heterotetrameric complex composed of two molecules of XerC and two molecules of XerD.

The protein localises to the cytoplasm. In terms of biological role, site-specific tyrosine recombinase, which acts by catalyzing the cutting and rejoining of the recombining DNA molecules. The XerC-XerD complex is essential to convert dimers of the bacterial chromosome into monomers to permit their segregation at cell division. It also contributes to the segregational stability of plasmids. The protein is Tyrosine recombinase XerD of Mycobacterium tuberculosis (strain CDC 1551 / Oshkosh).